We begin with the raw amino-acid sequence, 601 residues long: Glutamyl-tRNA(Gln) amidotransferase subunit B, mitochondrial (601 aa).

The N-terminal 55 residues, 1-55 (MLRPWLRQCPRATRSLACPQCHLPRPQTARRALRPLPALSLSHPIRSLQTTTTES), are a transit peptide targeting the mitochondrion.

It belongs to the GatB/GatE family. GatB subfamily. In terms of assembly, subunit of the heterotrimeric GatCAB amidotransferase (AdT) complex, composed of A, B and C subunits.

It is found in the mitochondrion. It catalyses the reaction L-glutamyl-tRNA(Gln) + L-glutamine + ATP + H2O = L-glutaminyl-tRNA(Gln) + L-glutamate + ADP + phosphate + H(+). Its function is as follows. Allows the formation of correctly charged Gln-tRNA(Gln) through the transamidation of misacylated Glu-tRNA(Gln) in the mitochondria. The reaction takes place in the presence of glutamine and ATP through an activated gamma-phospho-Glu-tRNA(Gln). The sequence is that of Glutamyl-tRNA(Gln) amidotransferase subunit B, mitochondrial from Aspergillus niger (strain ATCC MYA-4892 / CBS 513.88 / FGSC A1513).